The following is a 208-amino-acid chain: Transmembrane protein 160 (208 aa).

The N-terminal 45 residues, 1–45 (MASIRWLMGSRLSRFVCPFAQLVRQPVLRYVRPPVRALHRGSVRR), are a transit peptide targeting the mitochondrion. 3 helical membrane passes run 82–102 (GFLS…IAFV), 110–130 (AGYA…ASYV), and 147–167 (VLLH…AVSL). A compositionally biased stretch (acidic residues) spans 181-192 (DDEEHGADESSE). The tract at residues 181–208 (DDEEHGADESSECAECRARRDREKGQDK) is disordered. A compositionally biased stretch (basic and acidic residues) spans 194 to 208 (AECRARRDREKGQDK).

This sequence belongs to the TMEM160 family.

The protein localises to the mitochondrion inner membrane. The polypeptide is Transmembrane protein 160 (Danio rerio (Zebrafish)).